The primary structure comprises 337 residues: Peroxidase 14 (337 aa).

Positions 1–22 are cleaved as a signal peptide; it reads MARIGSFLILLSLTYALTLCIC. Asparagine 24 carries an N-linked (GlcNAc...) asparagine glycan. 4 cysteine pairs are disulfide-bonded: cysteine 44–cysteine 124, cysteine 77–cysteine 82, cysteine 130–cysteine 331, and cysteine 209–cysteine 241. The Proton acceptor role is filled by histidine 75. Positions 76, 79, 81, 83, and 85 each coordinate Ca(2+). Proline 172 is a binding site for substrate. Residue asparagine 191 is glycosylated (N-linked (GlcNAc...) asparagine). Histidine 202 serves as a coordination point for heme b. Residue threonine 203 coordinates Ca(2+). Residues asparagine 218 and asparagine 249 are each glycosylated (N-linked (GlcNAc...) asparagine). Ca(2+) is bound by residues aspartate 254, serine 257, and aspartate 262.

The protein belongs to the peroxidase family. Classical plant (class III) peroxidase subfamily. Heme b is required as a cofactor. The cofactor is Ca(2+).

It is found in the secreted. The catalysed reaction is 2 a phenolic donor + H2O2 = 2 a phenolic radical donor + 2 H2O. Functionally, removal of H(2)O(2), oxidation of toxic reductants, biosynthesis and degradation of lignin, suberization, auxin catabolism, response to environmental stresses such as wounding, pathogen attack and oxidative stress. These functions might be dependent on each isozyme/isoform in each plant tissue. The sequence is that of Peroxidase 14 (PER14) from Arabidopsis thaliana (Mouse-ear cress).